We begin with the raw amino-acid sequence, 153 residues long: 6,7-dimethyl-8-ribityllumazine synthase (153 aa).

Residues Phe-22, 56 to 58 (AFE), and 80 to 82 (TVI) contribute to the 5-amino-6-(D-ribitylamino)uracil site. 85–86 (ST) lines the (2S)-2-hydroxy-3-oxobutyl phosphate pocket. His-88 serves as the catalytic Proton donor. Phe-113 contacts 5-amino-6-(D-ribitylamino)uracil. A (2S)-2-hydroxy-3-oxobutyl phosphate-binding site is contributed by Arg-127.

This sequence belongs to the DMRL synthase family. As to quaternary structure, forms an icosahedral capsid composed of 60 subunits, arranged as a dodecamer of pentamers.

It catalyses the reaction (2S)-2-hydroxy-3-oxobutyl phosphate + 5-amino-6-(D-ribitylamino)uracil = 6,7-dimethyl-8-(1-D-ribityl)lumazine + phosphate + 2 H2O + H(+). It participates in cofactor biosynthesis; riboflavin biosynthesis; riboflavin from 2-hydroxy-3-oxobutyl phosphate and 5-amino-6-(D-ribitylamino)uracil: step 1/2. Functionally, catalyzes the formation of 6,7-dimethyl-8-ribityllumazine by condensation of 5-amino-6-(D-ribitylamino)uracil with 3,4-dihydroxy-2-butanone 4-phosphate. This is the penultimate step in the biosynthesis of riboflavin. The protein is 6,7-dimethyl-8-ribityllumazine synthase of Actinobacillus pleuropneumoniae (Haemophilus pleuropneumoniae).